A 383-amino-acid polypeptide reads, in one-letter code: Thioredoxin reductase 2 (383 aa).

Residues 66 to 69 (SGPA), 87 to 88 (FE), 95 to 100 (IAPGGQ), asparagine 109, valine 142, cysteine 200, aspartate 345, and 352 to 354 (RQA) each bind FAD. Cysteine 197 and cysteine 200 are disulfide-bonded.

It belongs to the class-II pyridine nucleotide-disulfide oxidoreductase family. In terms of assembly, homodimer. FAD is required as a cofactor.

It localises to the cytoplasm. It is found in the mitochondrion matrix. The enzyme catalyses [thioredoxin]-dithiol + NADP(+) = [thioredoxin]-disulfide + NADPH + H(+). Its function is as follows. Possesses thioredoxin-disulfide reductase activity towards thioredoxins O1, O2 and F3. The sequence is that of Thioredoxin reductase 2 (NTR2) from Arabidopsis thaliana (Mouse-ear cress).